A 784-amino-acid chain; its full sequence is MTKKLALKRKGKDAEPTNEVVASSEASENEEEEEDLLQAVKDPGEDSTDDEGIDQEYHSDSSEELQFESDEEGNYLGRKQSSSAEEDEESSDEDDDEEEGSSDEEGEEDEEKDSKSKQADDKPSSSGAASKKAPTTELSKRDTSKPEYQDSDTSDEEDIRNTVGNIPMHWYDEYKHIGYDWDAKKIIKPPQGDQIDEFLRKIEDPDFWRTVKDPLTGQDVRLTDEDIALIKRIVSGRIPNKDHEEYEPWIEWFTSEVEKMPIKNVPDHKRSFLPSVSEKKRVSRMVHALKMGWMKTTEEVEREKQAKRGPKFYMLWETDTSREHMRRIHDPVSAPKRDLPGHAESYNPPPEYLFDAKETKEWLKLKDEPHKRKLHFMPQKFKSLREVPAYSRYLRERFLRCLDLYLCPRAKRVKLNIDAEYLIPKLPSPRDLQPFPTVESMVYRGHTDLVRSVSVEPKGEYLVSGSDDKTVKIWEIATGRCIRTIETDEVVRCVAWCPNPKLSIIAVATGNRLLLVNPKVGDKVLVKKTDDLLAEAPSQDVIESERIKTAVQWSNAEADEQEKGVRVVITHFKPIRQVTWHGRGDYLATVMPEGANRSALIHQLSKRRSQIPFSKSKGLIQFVLFHPVKPCFFVATQHNIRIYDLVKQELVKKLLTNSKWISGMSIHPKGDNLLVSTYDKKMLWFDLDLSTKPYQTMRLHRNAVRSVAFHLRYPLFASGSDDQAVIVSHGMVYNDLLQNPLIVPLKKLQTHEKRDEFGVLDVNWHPVQPWIFSTGADSTIRLYT.

Residues 1–11 show a composition bias toward basic residues; sequence MTKKLALKRKG. Residues 1-159 form a disordered region; the sequence is MTKKLALKRK…DSDTSDEEDI (159 aa). Composition is skewed to acidic residues over residues 27–36, 45–54, 62–73, and 84–111; these read SENEEEEEDL, EDSTDDEGID, SEELQFESDEEG, and AEED…EDEE. The segment covering 112–123 has biased composition (basic and acidic residues); that stretch reads KDSKSKQADDKP. The segment covering 124 to 133 has biased composition (low complexity); that stretch reads SSSGAASKKA. Residues 138–148 are compositionally biased toward basic and acidic residues; sequence LSKRDTSKPEY. Residues 149–158 show a composition bias toward acidic residues; sequence QDSDTSDEED. WD repeat units lie at residues 445 to 486, 488 to 526, 570 to 612, 615 to 653, 656 to 695, 699 to 738, and 754 to 784; these read GHTD…RTIE, DEVV…KVLV, THFK…SQIP, KSKG…LVKK, TNSK…KPYQ, LHRN…DLLQ, and RDEF…RLYT.

The protein belongs to the WD repeat BOP1/ERB1 family.

It localises to the nucleus. The protein localises to the nucleolus. The protein resides in the nucleoplasm. Functionally, required for maturation of ribosomal RNAs and formation of the large ribosomal subunit. This is Ribosome biogenesis protein BOP1 homolog from Drosophila yakuba (Fruit fly).